The following is a 23-amino-acid chain: Brevinin-1Eb (23 aa).

Cysteines 17 and 23 form a disulfide.

It belongs to the frog skin active peptide (FSAP) family. Brevinin subfamily. As to expression, expressed by the skin glands.

The protein resides in the secreted. In terms of biological role, shows antibacterial activity against representative Gram-negative and Gram-positive bacterial species, and a very high hemolytic activity. This is Brevinin-1Eb from Pelophylax lessonae (Pool frog).